Here is a 160-residue protein sequence, read N- to C-terminus: Large ribosomal subunit protein bL19 (160 aa).

It belongs to the bacterial ribosomal protein bL19 family.

Its function is as follows. This protein is located at the 30S-50S ribosomal subunit interface and may play a role in the structure and function of the aminoacyl-tRNA binding site. The polypeptide is Large ribosomal subunit protein bL19 (Prochlorococcus marinus subsp. pastoris (strain CCMP1986 / NIES-2087 / MED4)).